The primary structure comprises 317 residues: Beta-ketoacyl-[acyl-carrier-protein] synthase III (317 aa).

Active-site residues include C112 and H244. The tract at residues 245–249 (QANLR) is ACP-binding. N274 is an active-site residue.

The protein belongs to the thiolase-like superfamily. FabH family. In terms of assembly, homodimer.

It is found in the cytoplasm. It carries out the reaction malonyl-[ACP] + acetyl-CoA + H(+) = 3-oxobutanoyl-[ACP] + CO2 + CoA. Its pathway is lipid metabolism; fatty acid biosynthesis. Its function is as follows. Catalyzes the condensation reaction of fatty acid synthesis by the addition to an acyl acceptor of two carbons from malonyl-ACP. Catalyzes the first condensation reaction which initiates fatty acid synthesis and may therefore play a role in governing the total rate of fatty acid production. Possesses both acetoacetyl-ACP synthase and acetyl transacylase activities. Its substrate specificity determines the biosynthesis of branched-chain and/or straight-chain of fatty acids. In Citrobacter koseri (strain ATCC BAA-895 / CDC 4225-83 / SGSC4696), this protein is Beta-ketoacyl-[acyl-carrier-protein] synthase III.